A 65-amino-acid polypeptide reads, in one-letter code: MGNIRTSFVKRLAKELIETHKGVFTTDFDQNKKLVMEYSTVSTKHLRNKIAGYVTRLVRLEQTQE.

The protein belongs to the eukaryotic ribosomal protein eS17 family.

This chain is Small ribosomal subunit protein eS17, found in Methanobrevibacter smithii (strain ATCC 35061 / DSM 861 / OCM 144 / PS).